The chain runs to 1176 residues: Growth-differentiation transition protein 5 (1176 aa).

The first 25 residues, 1–25, serve as a signal peptide directing secretion; it reads MKNNFFKKTIILLIFLSIFILYSNA. Residues 26–913 lie on the Extracellular side of the membrane; that stretch reads DEETITTPPG…DVPANENTLN (888 aa). A helical membrane pass occupies residues 914-934; that stretch reads LLTIVLPICSAVVVASSVMLG. Over 935-1176 the chain is Cytoplasmic; the sequence is RLFYKKKFKK…NVGYNVHEYF (242 aa). Low complexity-rich tracts occupy residues 965–974 and 1053–1066; these read SNIENKSESI and PQISPDSPQHSIPS. Disordered regions lie at residues 965-985 and 1050-1080; these read SNIENKSESIATPQQRNEQKE and VDTPQISPDSPQHSIPSSSPPPPPLPLPPST. Positions 1067–1078 are enriched in pro residues; sequence SSPPPPPLPLPP.

The protein belongs to the GDT family.

Its subcellular location is the membrane. In Dictyostelium discoideum (Social amoeba), this protein is Growth-differentiation transition protein 5 (gdt5).